Consider the following 346-residue polypeptide: DNA primase small subunit PriS (346 aa).

Residues aspartate 97, aspartate 99, and aspartate 280 contribute to the active site.

It belongs to the eukaryotic-type primase small subunit family. As to quaternary structure, heterodimer of a small subunit (PriS) and a large subunit (PriL). Requires Mg(2+) as cofactor. The cofactor is Mn(2+).

In terms of biological role, catalytic subunit of DNA primase, an RNA polymerase that catalyzes the synthesis of short RNA molecules used as primers for DNA polymerase during DNA replication. The small subunit contains the primase catalytic core and has DNA synthesis activity on its own. Binding to the large subunit stabilizes and modulates the activity, increasing the rate of DNA synthesis while decreasing the length of the DNA fragments, and conferring RNA synthesis capability. The DNA polymerase activity may enable DNA primase to also catalyze primer extension after primer synthesis. May also play a role in DNA repair. The polypeptide is DNA primase small subunit PriS (Thermococcus kodakarensis (strain ATCC BAA-918 / JCM 12380 / KOD1) (Pyrococcus kodakaraensis (strain KOD1))).